We begin with the raw amino-acid sequence, 1170 residues long: Chromosome partition protein Smc (1170 aa).

Position 32–39 (32–39 (PNGCGKSN)) interacts with ATP. 3 coiled-coil regions span residues 169 to 215 (GVSK…AVVA), 245 to 365 (DRQR…DAAA), and 401 to 508 (EAAH…TQGK). Residues 520 to 623 (ALPRLWKKLH…VADDLAQALA (104 aa)) form the SMC hinge domain. Coiled-coil stretches lie at residues 664–944 (QEIE…KEKL) and 983–1020 (ERKV…LQAT).

The protein belongs to the SMC family. Homodimer.

The protein localises to the cytoplasm. Functionally, required for chromosome condensation and partitioning. This chain is Chromosome partition protein Smc, found in Burkholderia pseudomallei (strain 1710b).